The primary structure comprises 171 residues: Dual specificity protein phosphatase OPG106 (171 aa).

Residues 23–171 (SPTIMTRVTN…IIEKYVIDKN (149 aa)) enclose the Tyrosine-protein phosphatase domain. The active-site Phosphocysteine intermediate is Cys110.

It belongs to the protein-tyrosine phosphatase family. Non-receptor class dual specificity subfamily. Homodimer.

The protein resides in the virion. It localises to the host cytoplasm. The catalysed reaction is O-phospho-L-tyrosyl-[protein] + H2O = L-tyrosyl-[protein] + phosphate. It catalyses the reaction O-phospho-L-seryl-[protein] + H2O = L-seryl-[protein] + phosphate. With respect to regulation, inhibited by NSC-62914, NSC-28086, NSC-105687, NSC-23173, 540211 and 217691 with IC50 values of 48, 51, 212, 342, 4 and 11 uM, respectively. Functionally, serine/tyrosine phosphatase which down-regulates cellular antiviral response by dephosphorylating activated host STAT1 and blocking interferon (IFN)-stimulated innate immune responses. Dephosphorylates the OPG144 protein. In Homo sapiens (Human), this protein is Dual specificity protein phosphatase OPG106 (OPG106).